A 506-amino-acid chain; its full sequence is Xaa-Pro aminopeptidase 3 (506 aa).

A mitochondrion-targeting transit peptide spans 1–31 (MLSLLSTPRLVPVIARLRGLSGCMSCLQRRY). An interaction with TNFRSF1B region spans residues 54 to 79 (HPHLLRPGEVTPGLSQVEYALRRHKL). Substrate-binding residues include tyrosine 300, aspartate 331, aspartate 342, histidine 423, histidine 430, glutamate 450, and glutamate 474. Mn(2+) contacts are provided by aspartate 331, aspartate 342, and histidine 423. 2 residues coordinate Mn(2+): glutamate 450 and glutamate 474.

The protein belongs to the peptidase M24B family. As to quaternary structure, homodimer. Interacts with TNFRSF1B/TNFR2 (activated) and TRAF2. Requires Mn(2+) as cofactor. Expressed in the kidney, specifically in intercalated cells, but not in principal cells, of the distal convoluted tubule and cortical collecting duct (at protein level).

It localises to the mitochondrion. The protein resides in the cytoplasm. The catalysed reaction is Release of any N-terminal amino acid, including proline, that is linked to proline, even from a dipeptide or tripeptide.. In terms of biological role, catalyzes the removal of a penultimate prolyl residue from the N-termini of peptides, such as Leu-Pro-Ala. Also shows low activity towards peptides with Ala or Ser at the P1 position. Promotes TNFRSF1B-mediated phosphorylation of MAPK8/JNK1 and MAPK9/JNK2, suggesting a function as an adapter protein for TNFRSF1B; the effect is independent of XPNPEP3 peptidase activity. May inhibit apoptotic cell death induced via TNF-TNFRSF1B signaling. This Rattus norvegicus (Rat) protein is Xaa-Pro aminopeptidase 3 (Xpnpep3).